The sequence spans 269 residues: MEIQFQQPNLQQHQKAGTKGGKFKGRNRNSNTNKFVGVRQRPSGRWVAEIKDTTQKIRMWLGTFETAEEAARAYDEAACLLRGSNTRTNFITHVSLDSPLASRIRNLLNNKKGNKKQEGVVDVGVDVDVPAPSASTTSTSSNTSNSDKNDHNSLSSGKVQNTMLFDDAYKPDLSNCKEDFQSCPPQSNFSWGFGPVFDRFPIAQILDMPKTDGMIDAASLELSEFERMKVERQISASLYAINGVHEYMETVQDSNETLWDLPPLCSLFC.

The segment covering 1–15 (MEIQFQQPNLQQHQK) has biased composition (polar residues). 2 disordered regions span residues 1–36 (MEIQFQQPNLQQHQKAGTKGGKFKGRNRNSNTNKFV) and 128–157 (DVPAPSASTTSTSSNTSNSDKNDHNSLSSG). A DNA-binding region (AP2/ERF) is located at residues 34 to 91 (KFVGVRQRPSGRWVAEIKDTTQKIRMWLGTFETAEEAARAYDEAACLLRGSNTRTNFI). Low complexity predominate over residues 128 to 146 (DVPAPSASTTSTSSNTSNS).

The protein belongs to the AP2/ERF transcription factor family. ERF subfamily.

It is found in the nucleus. Its function is as follows. Transcription factor involved in the symbiotic nodule signaling pathway in response to rhizobial stimulation. Functions as a transcriptional regulator required for root infection by symbiotic rhizobia, infection thread (IT) formation, and nodule development. May coordinate these processes. Functions downstream of the CCAMK-CYCLOPS complex. Probably not involved in arbuscular mycorrhizal (AM) symbiosis. The chain is Ethylene-responsive transcription factor ERN1 from Lotus japonicus (Lotus corniculatus var. japonicus).